A 321-amino-acid chain; its full sequence is Anthranilate phosphoribosyltransferase (321 aa).

5-phospho-alpha-D-ribose 1-diphosphate is bound by residues Gly72, Gly75–Asp76, Thr80, Asn82–Thr85, Lys99–Ser107, and Ser111. Gly72 contributes to the anthranilate binding site. Mg(2+) is bound at residue Ser84. Asn102 serves as a coordination point for anthranilate. Residue Arg157 coordinates anthranilate. Residues Asp216 and Glu217 each coordinate Mg(2+).

This sequence belongs to the anthranilate phosphoribosyltransferase family. As to quaternary structure, homodimer. The cofactor is Mg(2+).

It carries out the reaction N-(5-phospho-beta-D-ribosyl)anthranilate + diphosphate = 5-phospho-alpha-D-ribose 1-diphosphate + anthranilate. The protein operates within amino-acid biosynthesis; L-tryptophan biosynthesis; L-tryptophan from chorismate: step 2/5. Catalyzes the transfer of the phosphoribosyl group of 5-phosphorylribose-1-pyrophosphate (PRPP) to anthranilate to yield N-(5'-phosphoribosyl)-anthranilate (PRA). The polypeptide is Anthranilate phosphoribosyltransferase (Methanococcus vannielii (strain ATCC 35089 / DSM 1224 / JCM 13029 / OCM 148 / SB)).